The primary structure comprises 132 residues: Large ribosomal subunit protein bL17 (132 aa).

The protein belongs to the bacterial ribosomal protein bL17 family. Part of the 50S ribosomal subunit. Contacts protein L32.

The polypeptide is Large ribosomal subunit protein bL17 (Polaromonas sp. (strain JS666 / ATCC BAA-500)).